A 565-amino-acid polypeptide reads, in one-letter code: Thiol:disulfide interchange protein DsbD (565 aa).

Positions 1–19 (MAQRIFTLILLLCSTSVFA) are cleaved as a signal peptide. Disulfide bonds link C122/C128 and C182/C304. 7 consecutive transmembrane segments (helical) span residues 163 to 183 (LPFS…TPCV), 208 to 228 (LLTF…GLVV), 243 to 263 (YVLI…FGLF), 296 to 316 (IAGL…LLYI), 323 to 343 (WLGG…LMLI), 357 to 377 (WMEQ…VFLL), and 384 to 404 (VWGL…AFIT). Residues 434-565 (WAFGATHTAQ…FSAHLRDRQP (132 aa)) form the Thioredoxin domain. A disulfide bridge connects residues C480 and C483.

This sequence belongs to the thioredoxin family. DsbD subfamily.

It is found in the cell inner membrane. The enzyme catalyses [protein]-dithiol + NAD(+) = [protein]-disulfide + NADH + H(+). It carries out the reaction [protein]-dithiol + NADP(+) = [protein]-disulfide + NADPH + H(+). Functionally, required to facilitate the formation of correct disulfide bonds in some periplasmic proteins and for the assembly of the periplasmic c-type cytochromes. Acts by transferring electrons from cytoplasmic thioredoxin to the periplasm. This transfer involves a cascade of disulfide bond formation and reduction steps. This chain is Thiol:disulfide interchange protein DsbD, found in Shigella flexneri serotype 5b (strain 8401).